The following is a 257-amino-acid chain: Acetylglutamate kinase (257 aa).

Substrate is bound by residues 43–44 (GG), arginine 65, and asparagine 157. ATP contacts are provided by residues 180 to 185 (DVSGIL) and 208 to 210 (IIT).

The protein belongs to the acetylglutamate kinase family. ArgB subfamily. As to quaternary structure, homodimer.

The protein localises to the cytoplasm. The catalysed reaction is N-acetyl-L-glutamate + ATP = N-acetyl-L-glutamyl 5-phosphate + ADP. The protein operates within amino-acid biosynthesis; L-arginine biosynthesis; N(2)-acetyl-L-ornithine from L-glutamate: step 2/4. In terms of biological role, catalyzes the ATP-dependent phosphorylation of N-acetyl-L-glutamate. The polypeptide is Acetylglutamate kinase (Proteus mirabilis (strain HI4320)).